The chain runs to 142 residues: Transcription antitermination protein NusB (142 aa).

It belongs to the NusB family.

Functionally, involved in transcription antitermination. Required for transcription of ribosomal RNA (rRNA) genes. Binds specifically to the boxA antiterminator sequence of the ribosomal RNA (rrn) operons. This chain is Transcription antitermination protein NusB, found in Thermotoga petrophila (strain ATCC BAA-488 / DSM 13995 / JCM 10881 / RKU-1).